Here is a 162-residue protein sequence, read N- to C-terminus: Probable chemoreceptor glutamine deamidase CheD (162 aa).

Belongs to the CheD family.

The enzyme catalyses L-glutaminyl-[protein] + H2O = L-glutamyl-[protein] + NH4(+). In terms of biological role, probably deamidates glutamine residues to glutamate on methyl-accepting chemotaxis receptors (MCPs), playing an important role in chemotaxis. This Clostridium botulinum (strain Eklund 17B / Type B) protein is Probable chemoreceptor glutamine deamidase CheD.